A 91-amino-acid polypeptide reads, in one-letter code: UPF0298 protein spyM18_0447 (91 aa).

The protein belongs to the UPF0298 family.

Its subcellular location is the cytoplasm. This chain is UPF0298 protein spyM18_0447, found in Streptococcus pyogenes serotype M18 (strain MGAS8232).